The primary structure comprises 252 residues: tRNA pseudouridine synthase A (252 aa).

Catalysis depends on aspartate 54, which acts as the Nucleophile. Tyrosine 113 serves as a coordination point for substrate.

It belongs to the tRNA pseudouridine synthase TruA family. As to quaternary structure, homodimer.

The catalysed reaction is uridine(38/39/40) in tRNA = pseudouridine(38/39/40) in tRNA. Functionally, formation of pseudouridine at positions 38, 39 and 40 in the anticodon stem and loop of transfer RNAs. This Bacteroides fragilis (strain ATCC 25285 / DSM 2151 / CCUG 4856 / JCM 11019 / LMG 10263 / NCTC 9343 / Onslow / VPI 2553 / EN-2) protein is tRNA pseudouridine synthase A.